A 561-amino-acid chain; its full sequence is Asparagine synthetase [glutamine-hydrolyzing] (561 aa).

Cysteine 2 acts as the For GATase activity in catalysis. The Glutamine amidotransferase type-2 domain occupies 2–191; sequence CGIWALFGSD…PGHYEVLDLK (190 aa). Residues 49–53, 75–77, and aspartate 97 contribute to the L-glutamine site; these read RLAVV and NGE. One can recognise an Asparagine synthetase domain in the interval 213 to 536; sequence HALYDSVEKL…PGRADWLTHY (324 aa). Residues leucine 256, isoleucine 288, and 363–364 contribute to the ATP site; that span reads SG. N6-acetyllysine is present on lysine 385. Position 545 is a phosphothreonine (threonine 545). Residue serine 557 is modified to Phosphoserine.

It catalyses the reaction L-aspartate + L-glutamine + ATP + H2O = L-asparagine + L-glutamate + AMP + diphosphate + H(+). Its pathway is amino-acid biosynthesis; L-asparagine biosynthesis; L-asparagine from L-aspartate (L-Gln route): step 1/1. This is Asparagine synthetase [glutamine-hydrolyzing] (ASNS) from Cricetulus griseus (Chinese hamster).